A 491-amino-acid polypeptide reads, in one-letter code: UDP-N-acetylmuramate--L-alanine ligase (491 aa).

126-132 (GTHGKTT) lines the ATP pocket.

The protein belongs to the MurCDEF family.

It is found in the cytoplasm. The catalysed reaction is UDP-N-acetyl-alpha-D-muramate + L-alanine + ATP = UDP-N-acetyl-alpha-D-muramoyl-L-alanine + ADP + phosphate + H(+). It functions in the pathway cell wall biogenesis; peptidoglycan biosynthesis. Functionally, cell wall formation. This Salmonella agona (strain SL483) protein is UDP-N-acetylmuramate--L-alanine ligase.